A 462-amino-acid chain; its full sequence is uncharacterized protein (462 aa).

Positions 22–90 (KPIYKALAGQ…VGSGTFVSYD (69 aa)) constitute an HTH gntR-type domain. The H-T-H motif DNA-binding region spans 50–69 (QRELADYLDLNVSTISKAFK). N6-(pyridoxal phosphate)lysine is present on lysine 308.

In the C-terminal section; belongs to the class-I pyridoxal-phosphate-dependent aminotransferase family. Pyridoxal 5'-phosphate serves as cofactor.

This is an uncharacterized protein from Bacillus subtilis (strain 168).